The sequence spans 214 residues: Adenylate kinase (214 aa).

Residue Gly-10 to Thr-15 coordinates ATP. The NMP stretch occupies residues Ser-30 to Val-59. Residues Thr-31, Arg-36, Gln-57 to Val-59, Gly-85 to Arg-88, and Gln-92 each bind AMP. The LID stretch occupies residues Gly-122 to Asp-159. Residues Arg-123 and Thr-132–Tyr-133 contribute to the ATP site. AMP contacts are provided by Arg-156 and Arg-167. Lys-200 is an ATP binding site.

The protein belongs to the adenylate kinase family. Monomer.

The protein resides in the cytoplasm. The catalysed reaction is AMP + ATP = 2 ADP. Its pathway is purine metabolism; AMP biosynthesis via salvage pathway; AMP from ADP: step 1/1. Functionally, catalyzes the reversible transfer of the terminal phosphate group between ATP and AMP. Plays an important role in cellular energy homeostasis and in adenine nucleotide metabolism. In Photobacterium profundum (strain SS9), this protein is Adenylate kinase.